Reading from the N-terminus, the 1208-residue chain is Chromosome partition protein Smc (1208 aa).

Residue 32–39 coordinates ATP; it reads PNGCGKSN. Coiled-coil stretches lie at residues 170 to 205, 239 to 504, and 694 to 1054; these read VTKY…GERI, EARA…ARVQ, and VIER…QLQD.

This sequence belongs to the SMC family. Homodimer.

The protein localises to the cytoplasm. Required for chromosome condensation and partitioning. The polypeptide is Chromosome partition protein Smc (Thauera aminoaromatica).